The primary structure comprises 130 residues: Small ribosomal subunit protein uS8 (130 aa).

This sequence belongs to the universal ribosomal protein uS8 family. As to quaternary structure, part of the 30S ribosomal subunit. Contacts proteins S5 and S12.

Its function is as follows. One of the primary rRNA binding proteins, it binds directly to 16S rRNA central domain where it helps coordinate assembly of the platform of the 30S subunit. This chain is Small ribosomal subunit protein uS8, found in Idiomarina loihiensis (strain ATCC BAA-735 / DSM 15497 / L2-TR).